Here is a 164-residue protein sequence, read N- to C-terminus: MEMTNAQRLILSNQYKMMTMLDPDNAERYRRLQTIIERGYGLQMRELDREFGELTEEVCRTIINIMEMHHALQVSWTNLKDKQDLDERRLTFLGFDAATEARYLGFVRFMVHVEGRYPHFDAGTHGFNAQTKMWEKYNRMLAVWQSCPRQYHLSAVEIAQIINA.

Belongs to the UPF0304 family.

The protein is UPF0304 protein PC1_2778 of Pectobacterium carotovorum subsp. carotovorum (strain PC1).